Reading from the N-terminus, the 483-residue chain is V-type proton ATPase subunit B 2 (483 aa).

This sequence belongs to the ATPase alpha/beta chains family. V-ATPase is a heteromultimeric enzyme composed of a peripheral catalytic V1 complex (main components: subunits A, B, C, D, E, and F) attached to an integral membrane V0 proton pore complex (main component: the proteolipid protein).

Non-catalytic subunit of the peripheral V1 complex of vacuolar ATPase. V-ATPase is responsible for acidifying a variety of intracellular compartments in eukaryotic cells. The sequence is that of V-type proton ATPase subunit B 2 from Hordeum vulgare (Barley).